We begin with the raw amino-acid sequence, 563 residues long: Arginine--tRNA ligase (563 aa).

The short motif at 122-132 (PNIAKPMSMGH) is the 'HIGH' region element.

The protein belongs to the class-I aminoacyl-tRNA synthetase family. As to quaternary structure, monomer.

Its subcellular location is the cytoplasm. The catalysed reaction is tRNA(Arg) + L-arginine + ATP = L-arginyl-tRNA(Arg) + AMP + diphosphate. This is Arginine--tRNA ligase from Levilactobacillus brevis (strain ATCC 367 / BCRC 12310 / CIP 105137 / JCM 1170 / LMG 11437 / NCIMB 947 / NCTC 947) (Lactobacillus brevis).